We begin with the raw amino-acid sequence, 985 residues long: Bifunctional glutamine synthetase adenylyltransferase/adenylyl-removing enzyme (985 aa).

The segment at 1-472 (MTSSAPGNAD…HYARLFEGDP (472 aa)) is adenylyl removase. Positions 477–985 (SLPPVNYGAG…RRVFTSLLEE (509 aa)) are adenylyl transferase.

Belongs to the GlnE family. The cofactor is Mg(2+).

It carries out the reaction [glutamine synthetase]-O(4)-(5'-adenylyl)-L-tyrosine + phosphate = [glutamine synthetase]-L-tyrosine + ADP. It catalyses the reaction [glutamine synthetase]-L-tyrosine + ATP = [glutamine synthetase]-O(4)-(5'-adenylyl)-L-tyrosine + diphosphate. Its function is as follows. Involved in the regulation of glutamine synthetase GlnA, a key enzyme in the process to assimilate ammonia. When cellular nitrogen levels are high, the C-terminal adenylyl transferase (AT) inactivates GlnA by covalent transfer of an adenylyl group from ATP to specific tyrosine residue of GlnA, thus reducing its activity. Conversely, when nitrogen levels are low, the N-terminal adenylyl removase (AR) activates GlnA by removing the adenylyl group by phosphorolysis, increasing its activity. The regulatory region of GlnE binds the signal transduction protein PII (GlnB) which indicates the nitrogen status of the cell. The polypeptide is Bifunctional glutamine synthetase adenylyltransferase/adenylyl-removing enzyme (Bradyrhizobium sp. (strain BTAi1 / ATCC BAA-1182)).